Reading from the N-terminus, the 665-residue chain is DNA ligase (665 aa).

NAD(+) contacts are provided by residues 31–35 (DQEFD), 80–81 (SL), and glutamate 110. The active-site N6-AMP-lysine intermediate is the lysine 112. Positions 133, 170, 285, and 309 each coordinate NAD(+). Zn(2+) contacts are provided by cysteine 403, cysteine 406, cysteine 421, and cysteine 427. The BRCT domain maps to 587 to 665 (EHTDKLAGKS…SEEEFLQMIE (79 aa)).

Belongs to the NAD-dependent DNA ligase family. LigA subfamily. Mg(2+) serves as cofactor. Mn(2+) is required as a cofactor.

It carries out the reaction NAD(+) + (deoxyribonucleotide)n-3'-hydroxyl + 5'-phospho-(deoxyribonucleotide)m = (deoxyribonucleotide)n+m + AMP + beta-nicotinamide D-nucleotide.. In terms of biological role, DNA ligase that catalyzes the formation of phosphodiester linkages between 5'-phosphoryl and 3'-hydroxyl groups in double-stranded DNA using NAD as a coenzyme and as the energy source for the reaction. It is essential for DNA replication and repair of damaged DNA. The chain is DNA ligase from Phocaeicola vulgatus (strain ATCC 8482 / DSM 1447 / JCM 5826 / CCUG 4940 / NBRC 14291 / NCTC 11154) (Bacteroides vulgatus).